The primary structure comprises 525 residues: GMP synthase [glutamine-hydrolyzing] (525 aa).

Residues 9 to 207 enclose the Glutamine amidotransferase type-1 domain; that stretch reads RILILDFGSQ…VRDICQCEAL (199 aa). Catalysis depends on C86, which acts as the Nucleophile. Residues H181 and E183 contribute to the active site. The region spanning 208–400 is the GMPS ATP-PPase domain; that stretch reads WTPAKIIDDA…LGLPYDMLYR (193 aa). ATP is bound at residue 235-241; that stretch reads SGGVDSS.

In terms of assembly, homodimer.

It catalyses the reaction XMP + L-glutamine + ATP + H2O = GMP + L-glutamate + AMP + diphosphate + 2 H(+). Its pathway is purine metabolism; GMP biosynthesis; GMP from XMP (L-Gln route): step 1/1. Catalyzes the synthesis of GMP from XMP. This Escherichia coli (strain K12 / MC4100 / BW2952) protein is GMP synthase [glutamine-hydrolyzing].